We begin with the raw amino-acid sequence, 1694 residues long: Clathrin heavy chain (1694 aa).

Residues 1 to 478 form a globular terminal domain region; sequence MTNLPIRFQE…HDRKLALSIY (478 aa). WD40-like repeat stretches follow at residues 23 to 67, 68 to 107, 108 to 149, 150 to 195, 196 to 256, 257 to 300, and 301 to 329; these read SIGF…KQMK, TDAAIMNPKEPILALKIGQVLQLISIEQKMQLKSCQMQEP, LEFW…PDLQ, NTEI…QSIE, GHAA…EIGA, SDFP…ISNE, and NIFVTAFEESTNGIIAVNRKGQVLSVSID. The binding site for the uncoating ATPase, involved in lattice disassembly stretch occupies residues 448–464; it reads EKWLTEDKLECSEQLGD. Positions 479 to 522 are flexible linker; that stretch reads YRANASDKVITLFAETGEFDKIIAYCKKFNYKPDFMFLLQRMAN. The tract at residues 523–1694 is heavy chain arm; sequence ANPMGAADFA…QQNYNQYGGF (1172 aa). CHCR repeat units lie at residues 537–681, 687–829, 834–973, 980–1125, 1129–1270, 1275–1421, and 1424–1567; these read KEEG…QNLQ, AVSY…QEDY, IMSV…SLID, LPES…VKEC, FIKA…FRLA, INII…LLIN, and LSVL…NSAF. Residues 1214–1523 form an involved in binding clathrin light chain region; it reads AAKVLYTNIS…YLYKKNNRWA (310 aa). The interval 1551–1694 is trimerization; sequence GEELLQYFVD…QQNYNQYGGF (144 aa). Residues 1610–1640 are a coiled coil; that stretch reads KVDQLVDDFKARQKKTEEEKEQQNIESSQYQ.

This sequence belongs to the clathrin heavy chain family. As to quaternary structure, clathrin coats are formed from molecules containing 3 heavy chains and 3 light chains.

It localises to the cytoplasmic vesicle membrane. The protein localises to the membrane. The protein resides in the coated pit. Functionally, clathrin is the major protein of the polyhedral coat of coated pits and vesicles. This is Clathrin heavy chain (chcA) from Dictyostelium discoideum (Social amoeba).